Consider the following 484-residue polypeptide: Cytochrome P450 monooxygenase poxD (484 aa).

Residues 2-24 traverse the membrane as a helical segment; it reads VSPVVLATTAMIVVFLLAQRYLS. Cys-429 serves as a coordination point for heme.

The protein belongs to the cytochrome P450 family. It depends on heme as a cofactor.

It is found in the membrane. Its pathway is secondary metabolite biosynthesis. Cytochrome P450 monooxygenase; part of the gene cluster that mediates the biosynthesis of oxaleimides, cytotoxic compounds containing an unusual disubstituted succinimide moiety. The first step of the pathway is provided by the HR-PKS poxF that serves in a new mode of collaborative biosynthesis with the PKS-NRPS poxE, by providing the olefin containing amino acid substrate via the synthesis of an ACP-bound dec-4-enoate. The cytochrome P450 monooxygenase poxM-catalyzed oxidation at the alpha-position creates the enzyme-bound 2-hydroxydec-4-enoyl-ACP thioester, which may be prone to spontaneous hydrolysis to yield 2-hydroxydec-4-enoic acid due to increased electrophilicity of the carbonyl. 2-hydroxydec-4-enoic acid can then be further oxidized by poxM to yield the alpha-ketoacid 2-oxodec-4-enoicacid, which is reductively aminated by the aminotransferase poxL to yield (S,E)-2-aminodec-4-enoic acid. The Hybrid PKS-NRPS synthetase poxE then performs condensation between the octaketide product of its PKS modules and the amino group of (S,E)-2-aminodec-4-enoic acid which is activated and incorporated by the adenylation domain. The resulting aminoacyl product can be cyclized by the Diels-Alderase PoxQ and reductively released by the reductive (R) domain of poxE to yield an aldehyde intermediate. The released aldehyde is then substrate for a Knoevenagel condensation by the hydrolyase poxO followed by an oxidation at the 5-position of the pyrrolidone ring. The presence of the olefin from the amino acid building block allows for migration of the substituted allyl group to occur. This allylic transposition reaction takes place in a conjugate addition, semipinacol-like fashion to yield a succinimide intermediate. Iterative two-electron oxidations of the C7 methyl of the succinimide intermediate to the carboxylic acid can be catalyzed by one of two remaining cytochrome P450 monooxygenasess poxC or poxD to yield oxaleimide A. Subsequent oxidation yields the maleimide scaffold oxaleimide I. Both oxaleimide A and oxaleimide I can undergo oxidative modifications in the decalin ring to yield the series of products oxaleimides B to H. In Penicillium oxalicum, this protein is Cytochrome P450 monooxygenase poxD.